The chain runs to 833 residues: Interleukin enhancer-binding factor 3 homolog (833 aa).

Positions Arg-11–Ser-379 constitute a DZF domain. Disordered regions lie at residues Val-65 to Ala-86 and Asp-339 to Pro-403. Position 70 is a phosphothreonine (Thr-70). Residues Arg-373 to Pro-385 are compositionally biased toward basic and acidic residues. DRBM domains are found at residues Glu-402–Leu-471 and His-527–Pro-593. Disordered stretches follow at residues Asn-597–Gly-651, Gln-702–Ala-762, and Ala-775–Arg-833. A compositionally biased stretch (basic residues) spans Gly-629–Gly-639. Gly residues predominate over residues Arg-640 to Gly-651. Over residues Ala-775–Gln-818 the composition is skewed to polar residues.

Its subcellular location is the nucleus. The protein localises to the nucleolus. It localises to the cytoplasm. Functionally, RNA-binding protein that plays an essential role in the biogenesis of circular RNAs (circRNAs) which are produced by back-splicing circularization of pre-mRNAs. Within the nucleus, promotes circRNAs processing by stabilizing the regulatory elements residing in the flanking introns of the circularized exons. Plays thereby a role in the back-splicing of a subset of circRNAs. As a consequence, participates in a wide range of transcriptional and post-transcriptional processes. Binds to poly-U elements and AU-rich elements (AREs) in the 3'-UTR of target mRNAs. Upon viral infection, ILF3 accumulates in the cytoplasm and participates in the innate antiviral response. Mechanistically, ILF3 becomes phosphorylated and activated by the double-stranded RNA-activated protein kinase/PKR which releases ILF3 from cellular mature circRNAs. In turn, unbound ILF3 molecules are able to interact with and thus inhibit viral mRNAs. This is Interleukin enhancer-binding factor 3 homolog (ilf3) from Danio rerio (Zebrafish).